Here is a 274-residue protein sequence, read N- to C-terminus: Undecaprenyl-diphosphatase (274 aa).

7 consecutive transmembrane segments (helical) span residues 4 to 24, 46 to 63, 82 to 102, 109 to 129, 184 to 204, 218 to 238, and 249 to 269; these read ILLLKALILGIVEGLTEFLPI, LFEIVIQSGAILAVVWEY, KFILNLFVAFLPLAILGLAFG, LFNPVTVASTFILGAFVILWA, ATEFSFFLAIPTLIVATFYQL, MWAVGFVAAFVSAFLCVRWLL, and FAWYRIAFGIVVLATWQFGWV.

It belongs to the UppP family.

The protein resides in the cell inner membrane. The enzyme catalyses di-trans,octa-cis-undecaprenyl diphosphate + H2O = di-trans,octa-cis-undecaprenyl phosphate + phosphate + H(+). Its function is as follows. Catalyzes the dephosphorylation of undecaprenyl diphosphate (UPP). Confers resistance to bacitracin. In Dechloromonas aromatica (strain RCB), this protein is Undecaprenyl-diphosphatase.